The primary structure comprises 189 residues: GTP cyclohydrolase 1 (189 aa).

Residues cysteine 78, histidine 81, and cysteine 150 each contribute to the Zn(2+) site.

The protein belongs to the GTP cyclohydrolase I family. In terms of assembly, homomer.

The enzyme catalyses GTP + H2O = 7,8-dihydroneopterin 3'-triphosphate + formate + H(+). It participates in cofactor biosynthesis; 7,8-dihydroneopterin triphosphate biosynthesis; 7,8-dihydroneopterin triphosphate from GTP: step 1/1. This chain is GTP cyclohydrolase 1, found in Bacillus mycoides (strain KBAB4) (Bacillus weihenstephanensis).